The following is a 249-amino-acid chain: Type I iodothyronine deiodinase (249 aa).

Topologically, residues 1 to 12 (MGLPRPGLWLKR) are extracellular. A helical; Signal-anchor for type III membrane protein membrane pass occupies residues 13 to 33 (LWVLVQVAVEVAVGKVLMTLF). At 34 to 249 (PERVKQNILA…VRAVLEELHS (216 aa)) the chain is on the cytoplasmic side. Sec-126 is an active-site residue. Position 126 (Sec-126) is a non-standard amino acid, selenocysteine.

The protein belongs to the iodothyronine deiodinase family. In terms of assembly, predominantly monomer. Can form homodimers but homodimerization is not essential for enzyme activity.

It is found in the cell membrane. Its subcellular location is the endoplasmic reticulum membrane. The protein localises to the basolateral cell membrane. The catalysed reaction is 3,3',5-triiodo-L-thyronine + iodide + A + H(+) = L-thyroxine + AH2. It carries out the reaction 3,3',5'-triiodo-L-thyronine + iodide + A + H(+) = L-thyroxine + AH2. It catalyses the reaction 3,3'-diiodo-L-thyronine + iodide + A + H(+) = 3,3',5'-triiodo-L-thyronine + AH2. The enzyme catalyses 3,3'-diiodo-L-thyronine + iodide + A + H(+) = 3,3',5-triiodo-L-thyronine + AH2. The catalysed reaction is 3'-iodo-L-thyronine + iodide + A + H(+) = 3',5'-diiodo-L-thyronine + AH2. It carries out the reaction 3-iodo-L-thyronine + iodide + A + H(+) = 3,5-diiodo-L-thyronine + AH2. It catalyses the reaction 3-iodo-L-thyronine + iodide + A + H(+) = 3,3'-diiodo-L-thyronine + AH2. The enzyme catalyses 3,3'-diiodothyronamine + iodide + A + H(+) = 3,3',5'-triiodothyronamine + AH2. The catalysed reaction is 3'-iodothyronamine + iodide + A + H(+) = 3',5'-diiodothyronamine + AH2. It carries out the reaction 3-iodothyronamine + iodide + A + H(+) = 3,3'-diiodothyronamine + AH2. It catalyses the reaction 3,3'-diiodothyronamine + iodide + A + H(+) = 3,3',5-triiodothyronamine + AH2. The enzyme catalyses 3-iodothyronamine + iodide + A + H(+) = 3,5-diiodothyronamine + AH2. The catalysed reaction is 3,3'-diiodo-L-thyronine sulfate + iodide + A + H(+) = 3,3',5'-triiodo-L-thyronine sulfate + AH2. It carries out the reaction 3,3',5'-triiodo-L-thyronine sulfate + iodide + A + H(+) = L-thyroxine sulfate + AH2. It catalyses the reaction 3,3'-diiodo-L-thyronine sulfate + iodide + A + H(+) = 3,3',5-triiodo-L-thyronine sulfate + AH2. Functionally, plays a crucial role in the metabolism of thyroid hormones (TH) and has specific roles in TH activation and inactivation by deiodination. Catalyzes the deiodination of L-thyroxine (T4) to 3,5,3'-triiodothyronine (T3) via outer-ring deiodination (ORD) and of T4 to 3,3',5'-triiodothyronine (rT3) via inner-ring deiodination (IRD). Catalyzes the deiodiantion of rT3 to 3,3'-diiodothyronine (3,3'-T2) and 3',5'-diiodothyronine (3',5'-T2) to 3'-monoiodothyronine (3'-T1) via ORD. Catalyzes the deiodination of T3 to 3,3'-T2, 3,5-diiodothyronine (3,5-T2) to 3-monoiodothyronine (3-T1) and 3,3'-T2 to 3-T1 via IRD. Catalyzes the phenolic ring deiodinations of 3,3',5'-triiodothyronamine, 3',5'-diiodothyronamine and 3,3'-diiodothyronamine as well as tyrosyl ring deiodinations of 3,5,3'-triiodothyronamine and 3,5-diiodothyronamine. Catalyzes the deiodination of L-thyroxine sulfate and 3,3',5-triiodo-L-thyronine sulfate via IRD and of 3,3',5'-triiodo-L-thyronine sulfate via ORD. The chain is Type I iodothyronine deiodinase (DIO1) from Oryctolagus cuniculus (Rabbit).